The chain runs to 471 residues: tRNA(Ile)-lysidine synthase (471 aa).

27 to 32 (SGGPDS) contacts ATP.

It belongs to the tRNA(Ile)-lysidine synthase family.

Its subcellular location is the cytoplasm. The enzyme catalyses cytidine(34) in tRNA(Ile2) + L-lysine + ATP = lysidine(34) in tRNA(Ile2) + AMP + diphosphate + H(+). Functionally, ligates lysine onto the cytidine present at position 34 of the AUA codon-specific tRNA(Ile) that contains the anticodon CAU, in an ATP-dependent manner. Cytidine is converted to lysidine, thus changing the amino acid specificity of the tRNA from methionine to isoleucine. The polypeptide is tRNA(Ile)-lysidine synthase (Dehalococcoides mccartyi (strain CBDB1)).